A 147-amino-acid chain; its full sequence is uncharacterized protein (147 aa).

The ABM domain occupies 50-138; it reads IVVAGNIKVK…LLAKPAEIKI (89 aa).

It belongs to the LsrG family.

This is an uncharacterized protein from Synechocystis sp. (strain ATCC 27184 / PCC 6803 / Kazusa).